Reading from the N-terminus, the 421-residue chain is Probable UDP-arabinose 4-epimerase 1 (421 aa).

Over 1 to 33 (MLPTNRNRPQQRPARSWYFISDMDFSDPKRKPR) the chain is Cytoplasmic. A helical; Signal-anchor for type II membrane protein membrane pass occupies residues 34–53 (YLSKILMVALLTAMCVVMLT). Over 54 to 421 (QPPCHRRTPS…GYGPPQAMVL (368 aa)) the chain is Lumenal. 74–105 (HVLVTGGAGYIGSHAALRLLKDSFRVTIVDNL) serves as a coordination point for NAD(+). The active-site Proton acceptor is the Y222.

This sequence belongs to the NAD(P)-dependent epimerase/dehydratase family. NAD(+) serves as cofactor.

Its subcellular location is the golgi apparatus. It localises to the golgi stack membrane. The enzyme catalyses UDP-beta-L-arabinopyranose = UDP-alpha-D-xylose. It participates in nucleotide-sugar biosynthesis; UDP-L-arabinose biosynthesis; UDP-L-arabinose from UDP-alpha-D-xylose: step 1/1. The protein operates within cell wall biogenesis; cell wall polysaccharide biosynthesis. This chain is Probable UDP-arabinose 4-epimerase 1 (UEL-1), found in Oryza sativa subsp. japonica (Rice).